A 48-amino-acid chain; its full sequence is Large ribosomal subunit protein bL33 (48 aa).

The protein belongs to the bacterial ribosomal protein bL33 family.

This chain is Large ribosomal subunit protein bL33, found in Streptococcus mutans serotype c (strain ATCC 700610 / UA159).